The sequence spans 769 residues: Signal transducer and activator of transcription 3.1 (769 aa).

An Essential for nuclear import motif is present at residues 150–162 (DVRKKVQDLEQKM). The SH2 domain maps to 580-670 (WNEGYIMGFI…DATNILVSPL (91 aa)). Ser728 carries the phosphoserine; by NLK modification.

The protein belongs to the transcription factor STAT family. Forms a homodimer or a heterodimer with a related family member, such as stat1. Interacts with nlk.2. Post-translationally, phosphorylation of both tyrosine and serine residues, together with dimerization, is required for mesoderm induction.

Its subcellular location is the cytoplasm. It is found in the nucleus. Transcription factor that binds to target promoter sequences and activates transcription upon il6st/gp130 stimulation. Mediates ventralization of embryos, at least in part via inhibition of smad2 signaling. Required for hairy2 to induce dll1/delta1 and promote neural crest cell proliferation and differentiation. Involved in TGFbeta-mediated mesoderm induction in early embryos, acting downstream of map3k7/tak1 and nlk.2. This Xenopus laevis (African clawed frog) protein is Signal transducer and activator of transcription 3.1 (stat3.1).